Here is a 501-residue protein sequence, read N- to C-terminus: Lysine--tRNA ligase (501 aa).

Mg(2+) contacts are provided by Glu404 and Glu411.

Belongs to the class-II aminoacyl-tRNA synthetase family. As to quaternary structure, homodimer. Mg(2+) is required as a cofactor.

It is found in the cytoplasm. The catalysed reaction is tRNA(Lys) + L-lysine + ATP = L-lysyl-tRNA(Lys) + AMP + diphosphate. This is Lysine--tRNA ligase from Campylobacter jejuni (strain RM1221).